The chain runs to 104 residues: Large ribosomal subunit protein uL24 (104 aa).

It belongs to the universal ribosomal protein uL24 family. In terms of assembly, part of the 50S ribosomal subunit.

In terms of biological role, one of two assembly initiator proteins, it binds directly to the 5'-end of the 23S rRNA, where it nucleates assembly of the 50S subunit. One of the proteins that surrounds the polypeptide exit tunnel on the outside of the subunit. In Shewanella woodyi (strain ATCC 51908 / MS32), this protein is Large ribosomal subunit protein uL24.